Reading from the N-terminus, the 170-residue chain is Sec-independent protein translocase protein TatB (170 aa).

Residues 1–21 (MIDLGISKLALIGAVALIVIG) traverse the membrane as a helical segment.

It belongs to the TatB family. As to quaternary structure, the Tat system comprises two distinct complexes: a TatABC complex, containing multiple copies of TatA, TatB and TatC subunits, and a separate TatA complex, containing only TatA subunits. Substrates initially bind to the TatABC complex, which probably triggers association of the separate TatA complex to form the active translocon.

Its subcellular location is the cell inner membrane. Functionally, part of the twin-arginine translocation (Tat) system that transports large folded proteins containing a characteristic twin-arginine motif in their signal peptide across membranes. Together with TatC, TatB is part of a receptor directly interacting with Tat signal peptides. TatB may form an oligomeric binding site that transiently accommodates folded Tat precursor proteins before their translocation. The sequence is that of Sec-independent protein translocase protein TatB from Cupriavidus necator (strain ATCC 17699 / DSM 428 / KCTC 22496 / NCIMB 10442 / H16 / Stanier 337) (Ralstonia eutropha).